We begin with the raw amino-acid sequence, 290 residues long: Probable prolyl 4-hydroxylase 8 (290 aa).

Over 1 to 19 (MAKKPKQLRNKPRKSFSTQ) the chain is Cytoplasmic. The chain crosses the membrane as a helical; Signal-anchor for type II membrane protein span at residues 20–40 (TFTVVVLVLFVILILVGLGIF). The Lumenal portion of the chain corresponds to 41 to 290 (SLPSTNKTSS…TKWFHVHEYN (250 aa)). An N-linked (GlcNAc...) asparagine glycan is attached at asparagine 46. Residues 163-286 (NGEGLQVLHY…KWSSTKWFHV (124 aa)) enclose the Fe2OG dioxygenase domain. Residues histidine 181 and aspartate 183 each coordinate Fe cation. A glycan (N-linked (GlcNAc...) asparagine) is linked at asparagine 222. Histidine 267 serves as a coordination point for Fe cation. Lysine 277 is a 2-oxoglutarate binding site.

Belongs to the P4HA family. It depends on Fe(2+) as a cofactor. L-ascorbate serves as cofactor.

The protein localises to the endoplasmic reticulum membrane. It catalyses the reaction L-prolyl-[collagen] + 2-oxoglutarate + O2 = trans-4-hydroxy-L-prolyl-[collagen] + succinate + CO2. Catalyzes the post-translational formation of 4-hydroxyproline in -Xaa-Pro-Gly- sequences in proline-rich peptide sequences of plant glycoproteins and other proteins. Hydroxyprolines are important constituent of many plant cell wall glycoproteins such as extensins, hydroxyproline-rich glycoproteins, lectins and arabinogalactan proteins. The polypeptide is Probable prolyl 4-hydroxylase 8 (Arabidopsis thaliana (Mouse-ear cress)).